A 326-amino-acid chain; its full sequence is 2-dehydropantoate 2-reductase (326 aa).

Residues 7-12 and N103 each bind NADP(+); that span reads GAGAIG. N103 lines the substrate pocket. K205 serves as the catalytic Proton donor. Substrate-binding residues include N209, N213, and S274. E286 provides a ligand contact to NADP(+).

It belongs to the ketopantoate reductase family.

It localises to the cytoplasm. The catalysed reaction is (R)-pantoate + NADP(+) = 2-dehydropantoate + NADPH + H(+). The protein operates within cofactor biosynthesis; (R)-pantothenate biosynthesis; (R)-pantoate from 3-methyl-2-oxobutanoate: step 2/2. Functionally, catalyzes the NADPH-dependent reduction of ketopantoate into pantoic acid. This Mesorhizobium japonicum (strain LMG 29417 / CECT 9101 / MAFF 303099) (Mesorhizobium loti (strain MAFF 303099)) protein is 2-dehydropantoate 2-reductase.